A 176-amino-acid chain; its full sequence is Membrane glycoprotein UL144 (176 aa).

A signal peptide spans Met-1 to Thr-20. The stretch at Pro-58–Cys-95 is one TNFR-Cys repeat. 3 cysteine pairs are disulfide-bonded: Cys-59-Cys-71, Cys-74-Cys-87, and Cys-77-Cys-95. Residues Leu-134 to Ile-154 traverse the membrane as a helical segment.

Interacts with host TRIM23; this interaction causes auto-ubiquitination of TRAF6, leading to NF-kappaB activation.

It is found in the membrane. In terms of biological role, activates NF-kappa-B in a tumor necrosis factor receptor (TNFR)-associated factor 6 (TRAF6)-dependent manner, causing the up-regulation of the chemokine CCL22. The chain is Membrane glycoprotein UL144 (UL144) from Human cytomegalovirus (strain Merlin) (HHV-5).